The primary structure comprises 166 residues: 3-hydroxyacyl-[acyl-carrier-protein] dehydratase, mitochondrial (166 aa).

A mitochondrion-targeting transit peptide spans 1–17 (MLAKTVFPRGLLVLRSF). The 92-residue stretch at 34-125 (ETRVFSSEDI…VQAIALRETK (92 aa)) folds into the MaoC-like domain.

Homodimer. Expressed in leaves, roots, siliques and flowers.

Its subcellular location is the mitochondrion. The enzyme catalyses a (3R)-hydroxyacyl-[ACP] = a (2E)-enoyl-[ACP] + H2O. The catalysed reaction is (3R)-hydroxyhexadecanoyl-[ACP] = (2E)-hexadecenoyl-[ACP] + H2O. It catalyses the reaction (3R)-hydroxydecanoyl-[ACP] = (2E)-decenoyl-[ACP] + H2O. It participates in lipid metabolism; fatty acid biosynthesis. In terms of biological role, 3-hydroxyl-[acyl-carrier-protein] (3-hydroxyl-ACP) dehydratase required for mitochondrial fatty acid synthesis (mtFAS). MtFAS are essential for photorespiration and plant development, probably by influencing mitochondrial membrane lipid composition and other lipid metabolic pathways. The chain is 3-hydroxyacyl-[acyl-carrier-protein] dehydratase, mitochondrial from Arabidopsis thaliana (Mouse-ear cress).